Here is a 130-residue protein sequence, read N- to C-terminus: Small ribosomal subunit protein uS11 (130 aa).

This sequence belongs to the universal ribosomal protein uS11 family. As to quaternary structure, part of the 30S ribosomal subunit. Interacts with proteins S7 and S18. Binds to IF-3.

Its function is as follows. Located on the platform of the 30S subunit, it bridges several disparate RNA helices of the 16S rRNA. Forms part of the Shine-Dalgarno cleft in the 70S ribosome. This chain is Small ribosomal subunit protein uS11, found in Pseudoalteromonas atlantica (strain T6c / ATCC BAA-1087).